The primary structure comprises 115 residues: uncharacterized protein (115 aa).

A disordered region spans residues 1 to 74 (MGTGLRSQSL…VPGSLGDTEQ (74 aa)).

This is an uncharacterized protein from Homo sapiens (Human).